Here is a 210-residue protein sequence, read N- to C-terminus: Scoloptoxin SSD552 (210 aa).

Residues 1 to 23 form the signal peptide; it reads MNILLSSTLFVLLMFQIIGSGMG.

In terms of processing, contains 3 disulfide bonds. Expressed by the venom gland.

The protein localises to the secreted. The chain is Scoloptoxin SSD552 from Scolopendra dehaani (Thai centipede).